Here is a 303-residue protein sequence, read N- to C-terminus: RING finger protein 148 (303 aa).

A signal peptide spans 1–34 (MSLLRITSSAHSSASSRLWRLGIFLLLSLPDSKG). Asn-43 is a glycosylation site (N-linked (GlcNAc...) asparagine). One can recognise a PA domain in the interval 65 to 167 (HSPLERVSGV…LKGMELLHLI (103 aa)). Residues 186–208 (WLSHYIMSLFTFLTATVAYLFLY) form a helical membrane-spanning segment. An RING-type; atypical zinc finger spans residues 256–297 (CVVCFDIYKPQDVVRILTCKHIFHKACIDPWLLAHRTCPMCK).

The protein resides in the membrane. This is RING finger protein 148 (RNF148) from Bos taurus (Bovine).